We begin with the raw amino-acid sequence, 383 residues long: 6-hydroxynicotinate 3-monooxygenase (383 aa).

The N-terminal stretch at methionine 1 to alanine 26 is a signal peptide. FAD is bound by residues glycine 15, glutamate 34–glutamine 35, histidine 47, arginine 108, and leucine 130. The Proton acceptor role is filled by histidine 47. The active-site Proton acceptor is tyrosine 214. Residues aspartate 293 and alanine 306–alanine 307 each bind FAD.

It belongs to the 6-hydroxynicotinate 3-monooxygenase family. As to quaternary structure, monomer. Requires FAD as cofactor.

The enzyme catalyses 6-hydroxynicotinate + NADH + O2 + 2 H(+) = 2,5-dihydroxypyridine + CO2 + NAD(+) + H2O. It participates in cofactor degradation; nicotinate degradation. With respect to regulation, competitively inhibited by 6-hydroxynicotinaldehyde. Its function is as follows. Flavin-dependent monooxygenase (FMO) that catalyzes the decarboxylative hydroxylation of 6-hydroxynicotinic acid (6-HNA) to 2,5-dihydroxypyridine (2,5-DHP) with concomitant oxidation of NADH, a step in the aerobic nicotinate degradation pathway. Is also active on the non-natural substrate 5-chloro-6-hydroxynicotinate, and is much less efficient on the substrate analog 4-hydroxybenzoate. The chain is 6-hydroxynicotinate 3-monooxygenase from Bordetella bronchiseptica (strain ATCC BAA-588 / NCTC 13252 / RB50) (Alcaligenes bronchisepticus).